The following is a 742-amino-acid chain: Glucosylceramidase (742 aa).

N-linked (GlcNAc...) asparagine glycosylation is found at N37 and N160. E258 acts as the Proton donor in catalysis. Residue N388 is glycosylated (N-linked (GlcNAc...) asparagine). The active-site Nucleophile is the E492. N-linked (GlcNAc...) asparagine glycosylation is found at N552, N560, and N698. The chain crosses the membrane as a helical span at residues 701 to 721; sequence IAQILVAVVILLLGVLVAYYA.

This sequence belongs to the glycosyl hydrolase 5 (cellulase A) family.

It is found in the membrane. It catalyses the reaction a beta-D-glucosyl-(1&lt;-&gt;1')-N-acylsphing-4-enine + H2O = an N-acylsphing-4-enine + D-glucose. Specifically hydrolyzes the glucosidic linkage in glucosylceramide. May prevent accumulation of aberrent glucosylceramide containing immature ceramide. This is Glucosylceramidase from Cryptococcus neoformans var. grubii serotype A (strain H99 / ATCC 208821 / CBS 10515 / FGSC 9487) (Filobasidiella neoformans var. grubii).